The following is a 220-amino-acid chain: MDAPERLMPREKMLKSGIGSLTDVELLALFLRTGVPGKDVMALAHETLQRSGSLYGLLSADFAQFRGTGIGIAKYAQLKGIAELARRYYKARMMKENALLSPEMTREFLQSQLTGEEREIFLVIFLDARHRVIKHSRLFSGTLNHVEVHPREIIREAIKLNASAVILAHNHPSGCAEPSKADKLITERVVKCCQFMDIRVLDHLVIGRGEYVSFAERGWI.

The MPN domain occupies 98–220 (ALLSPEMTRE…YVSFAERGWI (123 aa)). Zn(2+) contacts are provided by His-169, His-171, and Asp-182. Residues 169–182 (HNHPSGCAEPSKAD) carry the JAMM motif motif.

This sequence belongs to the UPF0758 family. YicR subfamily.

This Citrobacter koseri (strain ATCC BAA-895 / CDC 4225-83 / SGSC4696) protein is UPF0758 protein CKO_05095.